The chain runs to 651 residues: Coronin-like protein (651 aa).

WD repeat units lie at residues 79–110, 138–169, 180–210, and 226–257; these read GHTA…GIWD, GHAR…KLWN, KHPD…RVWN, and AKNQ…GIWD. Residues 408–609 form a disordered region; that stretch reads APSFHEAKRP…TSPKSLGLKK (202 aa). A compositionally biased stretch (basic and acidic residues) spans 427 to 451; it reads LEEKKEQPKVEKPISESEKEVKQEA. Residues S441, S454, and S456 each carry the phosphoserine modification. Residues 452-465 show a composition bias toward low complexity; that stretch reads PKSPSPLKSASSSS. Phosphothreonine occurs at positions 517 and 529. Composition is skewed to basic and acidic residues over residues 523 to 540 and 547 to 572; these read ETKK…ELKP and TDRK…EQEK. Phosphoserine occurs at positions 573 and 579. Residues 578 to 590 show a composition bias toward low complexity; that stretch reads SSITAAKTAITAS. The stretch at 618–650 forms a coiled coil; the sequence is VLQLEDVVDKLTKANLDKDERLLKLEQKIGELS.

The protein belongs to the WD repeat coronin family. In terms of assembly, binds to F-actin.

This chain is Coronin-like protein (CRN1), found in Saccharomyces cerevisiae (strain ATCC 204508 / S288c) (Baker's yeast).